Here is a 153-residue protein sequence, read N- to C-terminus: Interleukin-4 (153 aa).

The first 24 residues, 1–24 (MGLTSQLLPPLFFLLACAGNFAHG), serve as a signal peptide directing secretion. 3 cysteine pairs are disulfide-bonded: Cys27–Cys151, Cys48–Cys89, and Cys70–Cys123. N-linked (GlcNAc...) asparagine glycosylation occurs at Asn62.

It belongs to the IL-4/IL-13 family.

It localises to the secreted. Participates in at least several B-cell activation processes as well as of other cell types. It is a costimulator of DNA-synthesis. It induces the expression of class II MHC molecules on resting B-cells. It enhances both secretion and cell surface expression of IgE and IgG1. It also regulates the expression of the low affinity Fc receptor for IgE (CD23) on both lymphocytes and monocytes. Positively regulates IL31RA expression in macrophages. Stimulates autophagy in dendritic cells by interfering with mTORC1 signaling and through the induction of RUFY4. In Papio anubis (Olive baboon), this protein is Interleukin-4 (IL4).